A 109-amino-acid polypeptide reads, in one-letter code: Small ribosomal subunit protein uS17 (109 aa).

This sequence belongs to the universal ribosomal protein uS17 family. As to quaternary structure, part of the 30S ribosomal subunit.

One of the primary rRNA binding proteins, it binds specifically to the 5'-end of 16S ribosomal RNA. The sequence is that of Small ribosomal subunit protein uS17 from Methanococcus maripaludis (strain DSM 14266 / JCM 13030 / NBRC 101832 / S2 / LL).